Reading from the N-terminus, the 518-residue chain is Glutamate--cysteine ligase (518 aa).

Belongs to the glutamate--cysteine ligase type 1 family. Type 1 subfamily.

The catalysed reaction is L-cysteine + L-glutamate + ATP = gamma-L-glutamyl-L-cysteine + ADP + phosphate + H(+). The protein operates within sulfur metabolism; glutathione biosynthesis; glutathione from L-cysteine and L-glutamate: step 1/2. This chain is Glutamate--cysteine ligase, found in Shigella sonnei (strain Ss046).